Reading from the N-terminus, the 816-residue chain is Larval serum protein 1 alpha chain (816 aa).

The N-terminal stretch at 1–16 (MKFAIAFLACVAVVTA) is a signal peptide.

This sequence belongs to the hemocyanin family. As to quaternary structure, heterohexamer, composed of three subunits, alpha, beta and gamma. As to expression, larval hemolymph.

It is found in the secreted. It localises to the extracellular space. Functionally, larval storage protein (LSP) which may serve as a store of amino acids for synthesis of adult proteins. This is Larval serum protein 1 alpha chain (Lsp1alpha) from Drosophila melanogaster (Fruit fly).